The following is a 789-amino-acid chain: MTKPAADASAVLTAEDTLVLASTATPVEMELIMGWLGQQRARHPDSKFDILKLPPRNAPPAALTALVEQLEPGFASSPQSGEDRSIVPVRVIWLPPADRSRAGKVAALLPGRDPYHPSQRQQRRILRTDPRRARVVAGESAKVSELRQQWRDTTVAEHKRDFAQFVSRRALLALARAEYQILGPQYKSPRLVKPEMLASARFRAGLDRIPGATVEDAGKMLDELSTGWSQVSVDLVSVLGRLASRGFDPEFDYDEYQVAAMRAALEAHPAVLLFSHRSYIDGVVVPVAMQDNRLPPVHMFGGINLSFGLMGPLMRRSGMIFIRRNIGNDPLYKYVLKEYVGYVVEKRFNLSWSIEGTRSRTGKMLPPKLGLMSYVADAYLDGRSDDILLQGVSICFDQLHEITEYAAYARGAEKTPEGLRWLYNFIKAQGERNFGKIYVRFPEAVSMRQYLGAPHGELTQDPAAKRLALQKMSFEVAWRILQATPVTATGLVSALLLTTRGTALTLDQLHHTLQDSLDYLERKQSPVSTSALRLRSREGVRAAADALSNGHPVTRVDSGREPVWYIAPDDEHAAAFYRNSVIHAFLETSIVELALAHAKHAEGDRVAAFWAQAMRLRDLLKFDFYFADSTAFRANIAQEMAWHQDWEDHLGVGGNEIDAMLYAKRPLMSDAMLRVFFEAYEIVADVLRDAPPDIGPEELTELALGLGRQFVAQGRVRSSEPVSTLLFATARQVAVDQELIAPAADLAERRVAFRRELRNILRDFDYVEQIARNQFVAREFKARQGRDRI.

The HXXXXD motif motif lies at 276 to 281; the sequence is HRSYID.

The protein belongs to the GPAT/DAPAT family.

The protein resides in the cell membrane. The enzyme catalyses sn-glycerol 3-phosphate + an acyl-CoA = a 1-acyl-sn-glycero-3-phosphate + CoA. It participates in phospholipid metabolism; CDP-diacylglycerol biosynthesis; CDP-diacylglycerol from sn-glycerol 3-phosphate: step 1/3. This Mycobacterium tuberculosis (strain CDC 1551 / Oshkosh) protein is Glycerol-3-phosphate acyltransferase (plsB).